The sequence spans 441 residues: Ribosomal protein uS12 methylthiotransferase RimO (441 aa).

Residues 8 to 118 form the MTTase N-terminal domain; that stretch reads PKIGFVSLGC…VLEHVHHYVP (111 aa). [4Fe-4S] cluster-binding residues include Cys-17, Cys-53, Cys-82, Cys-150, Cys-154, and Cys-157. The 238-residue stretch at 136–373 folds into the Radical SAM core domain; that stretch reads LTPRHYAYLK…MQLQQQISAE (238 aa). The region spanning 376 to 441 is the TRAM domain; that stretch reads QEKVGREILV…DEYDLWGSRV (66 aa).

This sequence belongs to the methylthiotransferase family. RimO subfamily. [4Fe-4S] cluster serves as cofactor.

The protein localises to the cytoplasm. It carries out the reaction L-aspartate(89)-[ribosomal protein uS12]-hydrogen + (sulfur carrier)-SH + AH2 + 2 S-adenosyl-L-methionine = 3-methylsulfanyl-L-aspartate(89)-[ribosomal protein uS12]-hydrogen + (sulfur carrier)-H + 5'-deoxyadenosine + L-methionine + A + S-adenosyl-L-homocysteine + 2 H(+). In terms of biological role, catalyzes the methylthiolation of an aspartic acid residue of ribosomal protein uS12. The sequence is that of Ribosomal protein uS12 methylthiotransferase RimO from Escherichia coli (strain SMS-3-5 / SECEC).